Reading from the N-terminus, the 553-residue chain is Phosphomethylpyrimidine synthase (553 aa).

Residues Asn-192, Met-221, Tyr-250, His-286, 306–308 (SRG), 347–350 (DGLR), and Glu-386 contribute to the substrate site. A Zn(2+)-binding site is contributed by His-390. Position 413 (Tyr-413) interacts with substrate. His-454 lines the Zn(2+) pocket. [4Fe-4S] cluster is bound by residues Cys-534, Cys-537, and Cys-542.

It belongs to the ThiC family. Homodimer. [4Fe-4S] cluster is required as a cofactor.

It carries out the reaction 5-amino-1-(5-phospho-beta-D-ribosyl)imidazole + S-adenosyl-L-methionine = 4-amino-2-methyl-5-(phosphooxymethyl)pyrimidine + CO + 5'-deoxyadenosine + formate + L-methionine + 3 H(+). It functions in the pathway cofactor biosynthesis; thiamine diphosphate biosynthesis. In terms of biological role, catalyzes the synthesis of the hydroxymethylpyrimidine phosphate (HMP-P) moiety of thiamine from aminoimidazole ribotide (AIR) in a radical S-adenosyl-L-methionine (SAM)-dependent reaction. The sequence is that of Phosphomethylpyrimidine synthase from Anaplasma marginale (strain St. Maries).